The primary structure comprises 176 residues: Macro domain-containing protein mll7730 (176 aa).

In terms of domain architecture, Macro spans methionine 1–arginine 174.

This sequence belongs to the MacroD-type family.

This Mesorhizobium japonicum (strain LMG 29417 / CECT 9101 / MAFF 303099) (Mesorhizobium loti (strain MAFF 303099)) protein is Macro domain-containing protein mll7730.